The chain runs to 283 residues: Putative S-adenosyl-L-methionine-dependent methyltransferase SAV_474/SAV474 (283 aa).

S-adenosyl-L-methionine contacts are provided by residues Asp-121 and 150–151; that span reads DL. The interval 258–283 is disordered; the sequence is AAYGRPISTPPQREERPGGLISAVRR.

Belongs to the UPF0677 family.

Functionally, exhibits S-adenosyl-L-methionine-dependent methyltransferase activity. The polypeptide is Putative S-adenosyl-L-methionine-dependent methyltransferase SAV_474/SAV474 (Streptomyces avermitilis (strain ATCC 31267 / DSM 46492 / JCM 5070 / NBRC 14893 / NCIMB 12804 / NRRL 8165 / MA-4680)).